We begin with the raw amino-acid sequence, 287 residues long: Elongation factor Ts (287 aa).

The segment at 77–80 (TDFV) is involved in Mg(2+) ion dislocation from EF-Tu.

It belongs to the EF-Ts family.

It is found in the cytoplasm. In terms of biological role, associates with the EF-Tu.GDP complex and induces the exchange of GDP to GTP. It remains bound to the aminoacyl-tRNA.EF-Tu.GTP complex up to the GTP hydrolysis stage on the ribosome. The chain is Elongation factor Ts from Wolbachia sp. subsp. Brugia malayi (strain TRS).